A 293-amino-acid chain; its full sequence is Homoserine kinase (293 aa).

Residue Pro84–Ala94 coordinates ATP.

This sequence belongs to the GHMP kinase family. Homoserine kinase subfamily.

It localises to the cytoplasm. The catalysed reaction is L-homoserine + ATP = O-phospho-L-homoserine + ADP + H(+). The protein operates within amino-acid biosynthesis; L-threonine biosynthesis; L-threonine from L-aspartate: step 4/5. Functionally, catalyzes the ATP-dependent phosphorylation of L-homoserine to L-homoserine phosphate. The chain is Homoserine kinase from Nautilia profundicola (strain ATCC BAA-1463 / DSM 18972 / AmH).